A 386-amino-acid chain; its full sequence is MATTNSFTILIFMILATTSSTFATLGEMVTVLSIDGGGIKGIIPATILEFLEGQLQEVDNNTDARLADYFDVIGGTSTGGLLTAMITTPNETNRPFAAAKDIVPFYFEHGPKIFQSSGSIFGPKYDGKYLMQVLQEKLGETRVHQALTEVAISSFDIKTNKPVIFTKSNLAKSPELDAKMYDICYSTAAAPTFFPPHYFATNTSNGDKYEFNLVDGAVATVDDPALLSISVATKLAQVDPKFASIKSLNYKQMLLLSLGTGTTSEFDKTYTAEETAKWGTARWMLVIQKMTSAASSYMTDYYLSTAFQALDSQNNYLRVQENALTGTTTELDDASEANMQLLVQVGEDLLKKSVSKDNPETYEEALKRFAKLLSDRKKLRANKASY.

Residues 1 to 23 (MATTNSFTILIFMILATTSSTFA) form the signal peptide. One can recognise a PNPLA domain in the interval 32-229 (LSIDGGGIKG…TVDDPALLSI (198 aa)). The GXGXXG motif lies at 36–41 (GGGIKG). A glycan (N-linked (GlcNAc...) asparagine) is linked at Asn60. The short motif at 75-79 (GTSTG) is the GXSXG element. Ser77 functions as the Nucleophile in the catalytic mechanism. 2 N-linked (GlcNAc...) asparagine glycosylation sites follow: Asn90 and Asn202. Catalysis depends on Asp215, which acts as the Proton acceptor. Positions 215-217 (DGA) match the DGA/G motif.

It belongs to the patatin family. Post-translationally, N-glycosylated. As to expression, tuber and stolon.

Its subcellular location is the vacuole. Its function is as follows. Probable lipolytic acyl hydrolase (LAH), an activity which is thought to be involved in the response of tubers to pathogens. The sequence is that of Patatin-T5 from Solanum tuberosum (Potato).